Reading from the N-terminus, the 258-residue chain is Venom plasminogen activator TSV-PA (258 aa).

Positions 1-18 (MELIRVLANLLILQLSYA) are cleaved as a signal peptide. Positions 19-24 (QKSSEL) are excised as a propeptide. The 225-residue stretch at 25-249 (VFGGDECNIN…YLDWIKSIIA (225 aa)) folds into the Peptidase S1 domain. 6 disulfide bridges follow: cysteine 31–cysteine 163, cysteine 50–cysteine 66, cysteine 98–cysteine 256, cysteine 142–cysteine 210, cysteine 174–cysteine 189, and cysteine 200–cysteine 225. Catalysis depends on charge relay system residues histidine 65 and aspartate 110. N-linked (GlcNAc...) asparagine glycosylation occurs at asparagine 185. Serine 204 (charge relay system) is an active-site residue.

Belongs to the peptidase S1 family. Snake venom subfamily. In terms of assembly, monomer. Expressed by the venom gland.

The protein resides in the secreted. Snake venom serine protease that activates plasminogen. The polypeptide is Venom plasminogen activator TSV-PA (Trimeresurus stejnegeri (Chinese green tree viper)).